A 351-amino-acid chain; its full sequence is Photosystem II D2 protein (351 aa).

Residues 39-59 form a helical membrane-spanning segment; it reads CAYLALGGWLTGTTFVTSWYT. Residue His116 coordinates chlorophyll a. A helical membrane pass occupies residues 123–139; that stretch reads GFMLRQFEIARLVGIRP. Pheophytin a is bound by residues Gln128 and Asn141. Residues 151 to 164 traverse the membrane as a helical segment; that stretch reads VFVSVFLMYPLGQS. A chlorophyll a-binding site is contributed by His196. The helical transmembrane segment at 206–226 threads the bilayer; it reads GALLCAIHGATVENTLFEDGE. A plastoquinone is bound by residues His213 and Phe260. His213 lines the Fe cation pocket. His267 is a binding site for Fe cation. A helical transmembrane segment spans residues 277 to 293; that stretch reads GLWMSAIGIVGLALNLR.

Belongs to the reaction center PufL/M/PsbA/D family. As to quaternary structure, PSII is composed of 1 copy each of membrane proteins PsbA, PsbB, PsbC, PsbD, PsbE, PsbF, PsbH, PsbI, PsbJ, PsbK, PsbL, PsbM, PsbT, PsbX, PsbY, PsbZ, Psb30/Ycf12, peripheral proteins PsbO, CyanoQ (PsbQ), PsbU, PsbV and a large number of cofactors. It forms dimeric complexes. Requires The D1/D2 heterodimer binds P680, chlorophylls that are the primary electron donor of PSII, and subsequent electron acceptors. It shares a non-heme iron and each subunit binds pheophytin, quinone, additional chlorophylls, carotenoids and lipids. There is also a Cl(-1) ion associated with D1 and D2, which is required for oxygen evolution. The PSII complex binds additional chlorophylls, carotenoids and specific lipids. as cofactor.

It is found in the cellular thylakoid membrane. It catalyses the reaction 2 a plastoquinone + 4 hnu + 2 H2O = 2 a plastoquinol + O2. In terms of biological role, photosystem II (PSII) is a light-driven water:plastoquinone oxidoreductase that uses light energy to abstract electrons from H(2)O, generating O(2) and a proton gradient subsequently used for ATP formation. It consists of a core antenna complex that captures photons, and an electron transfer chain that converts photonic excitation into a charge separation. The D1/D2 (PsbA/PsbD) reaction center heterodimer binds P680, the primary electron donor of PSII as well as several subsequent electron acceptors. D2 is needed for assembly of a stable PSII complex. This is Photosystem II D2 protein from Crocosphaera subtropica (strain ATCC 51142 / BH68) (Cyanothece sp. (strain ATCC 51142)).